A 338-amino-acid polypeptide reads, in one-letter code: Ketol-acid reductoisomerase (NADP(+)) (338 aa).

Residues 1 to 181 enclose the KARI N-terminal Rossmann domain; it reads MQVYYDKDAD…GGGRAGVIET (181 aa). Residues 24 to 27, Arg47, Ser50, Ser52, and 82 to 85 each bind NADP(+); these read YGSQ and DEHQ. The active site involves His107. NADP(+) is bound at residue Gly133. In terms of domain architecture, KARI C-terminal knotted spans 182-327; the sequence is SFKDETETDL…AKLRDMMPWI (146 aa). Residues Asp190, Glu194, Glu226, and Glu230 each contribute to the Mg(2+) site. Position 251 (Ser251) interacts with substrate.

The protein belongs to the ketol-acid reductoisomerase family. Requires Mg(2+) as cofactor.

The catalysed reaction is (2R)-2,3-dihydroxy-3-methylbutanoate + NADP(+) = (2S)-2-acetolactate + NADPH + H(+). It carries out the reaction (2R,3R)-2,3-dihydroxy-3-methylpentanoate + NADP(+) = (S)-2-ethyl-2-hydroxy-3-oxobutanoate + NADPH + H(+). It participates in amino-acid biosynthesis; L-isoleucine biosynthesis; L-isoleucine from 2-oxobutanoate: step 2/4. Its pathway is amino-acid biosynthesis; L-valine biosynthesis; L-valine from pyruvate: step 2/4. Involved in the biosynthesis of branched-chain amino acids (BCAA). Catalyzes an alkyl-migration followed by a ketol-acid reduction of (S)-2-acetolactate (S2AL) to yield (R)-2,3-dihydroxy-isovalerate. In the isomerase reaction, S2AL is rearranged via a Mg-dependent methyl migration to produce 3-hydroxy-3-methyl-2-ketobutyrate (HMKB). In the reductase reaction, this 2-ketoacid undergoes a metal-dependent reduction by NADPH to yield (R)-2,3-dihydroxy-isovalerate. This chain is Ketol-acid reductoisomerase (NADP(+)), found in Thioalkalivibrio sulfidiphilus (strain HL-EbGR7).